The chain runs to 520 residues: 2-isopropylmalate synthase (520 aa).

One can recognise a Pyruvate carboxyltransferase domain in the interval 5 to 268 (VYIFDTTLRD…YTDVNTKEIY (264 aa)). Mn(2+) is bound by residues aspartate 14, histidine 202, histidine 204, and asparagine 238. The interval 394 to 520 (KVLHFQVQSG…RQEIREEGTV (127 aa)) is regulatory domain.

Belongs to the alpha-IPM synthase/homocitrate synthase family. LeuA type 1 subfamily. In terms of assembly, homodimer. It depends on Mn(2+) as a cofactor.

The protein localises to the cytoplasm. The enzyme catalyses 3-methyl-2-oxobutanoate + acetyl-CoA + H2O = (2S)-2-isopropylmalate + CoA + H(+). Its pathway is amino-acid biosynthesis; L-leucine biosynthesis; L-leucine from 3-methyl-2-oxobutanoate: step 1/4. Catalyzes the condensation of the acetyl group of acetyl-CoA with 3-methyl-2-oxobutanoate (2-ketoisovalerate) to form 3-carboxy-3-hydroxy-4-methylpentanoate (2-isopropylmalate). This is 2-isopropylmalate synthase from Aquifex aeolicus (strain VF5).